A 658-amino-acid polypeptide reads, in one-letter code: Serine/threonine-protein kinase shk1/pak1 (658 aa).

Disordered stretches follow at residues 1-21 (MERG…ITPI), 39-104 (RKLK…SYDE), 126-147 (GGSS…STVI), and 213-365 (GAKP…QQSN). Polar residues predominate over residues 66 to 98 (PLSQSRTTVSRVSLGSRQHSSSSIRKLQTNVSD). Residues 129–140 (SPTSSYGSGSAS) are compositionally biased toward low complexity. Residues 147-160 (ISSPFDPKHVTHVG) enclose the CRIB domain. 2 stretches are compositionally biased toward low complexity: residues 226–254 (PLLS…LYPS) and 262–272 (ASSSSSPLLSS). The span at 273–300 (QTVKTTTSNASRQPSPLVSSKSTDNIIR) shows a compositional bias: polar residues. Phosphoserine is present on residues S301 and S303. The Protein kinase domain occupies 386–637 (YRNFVKIGQG…SGELLRHPFL (252 aa)). Residues 392 to 400 (IGQGASGDV) and K415 each bind ATP. D505 (proton acceptor) is an active-site residue.

It belongs to the protein kinase superfamily. STE Ser/Thr protein kinase family. STE20 subfamily. In terms of assembly, forms an activated complex with GTP-bound ras-like cdc42. Interacts with skb1 and the SH3 domain of skb5 via its amino-terminal regulatory domain. Skb1, cdc42 and shk1 are able to form a ternary complex in vivo. Interacts with rga8 and may interact with byr2. Autophosphorylated on serine residues.

Its subcellular location is the cytoplasm. The protein resides in the cytoskeleton. The protein localises to the spindle. It catalyses the reaction L-seryl-[protein] + ATP = O-phospho-L-seryl-[protein] + ADP + H(+). It carries out the reaction L-threonyl-[protein] + ATP = O-phospho-L-threonyl-[protein] + ADP + H(+). MAP4K component of the MAPK pathway required for the mating pheromone response. Phosphorylates histone H2B to form H2BS10ph. Phosphorylates tea1. Required for skb1-dependent mitotic inhibitory function. Regulates microtubule dynamics and cell polarity. This is Serine/threonine-protein kinase shk1/pak1 (shk1) from Schizosaccharomyces pombe (strain 972 / ATCC 24843) (Fission yeast).